The primary structure comprises 219 residues: ATP-dependent Clp protease proteolytic subunit 1 (219 aa).

Residue Ser113 is the Nucleophile of the active site. His138 is a catalytic residue.

This sequence belongs to the peptidase S14 family. As to quaternary structure, fourteen ClpP subunits assemble into 2 heptameric rings which stack back to back to give a disk-like structure with a central cavity, resembling the structure of eukaryotic proteasomes.

It localises to the cytoplasm. It catalyses the reaction Hydrolysis of proteins to small peptides in the presence of ATP and magnesium. alpha-casein is the usual test substrate. In the absence of ATP, only oligopeptides shorter than five residues are hydrolyzed (such as succinyl-Leu-Tyr-|-NHMec, and Leu-Tyr-Leu-|-Tyr-Trp, in which cleavage of the -Tyr-|-Leu- and -Tyr-|-Trp bonds also occurs).. Its function is as follows. Cleaves peptides in various proteins in a process that requires ATP hydrolysis. Has a chymotrypsin-like activity. Plays a major role in the degradation of misfolded proteins. Probably partially responsible for degradation of ECF sigma factor SigR prime. This is ATP-dependent Clp protease proteolytic subunit 1 from Streptomyces coelicolor (strain ATCC BAA-471 / A3(2) / M145).